Here is a 101-residue protein sequence, read N- to C-terminus: Small ribosomal subunit protein uS14 (101 aa).

It belongs to the universal ribosomal protein uS14 family. Part of the 30S ribosomal subunit. Contacts proteins S3 and S10.

Binds 16S rRNA, required for the assembly of 30S particles and may also be responsible for determining the conformation of the 16S rRNA at the A site. This is Small ribosomal subunit protein uS14 from Sodalis glossinidius (strain morsitans).